The primary structure comprises 117 residues: UPF0127 protein PYRAB11210 (117 aa).

It belongs to the UPF0127 family.

The sequence is that of UPF0127 protein PYRAB11210 from Pyrococcus abyssi (strain GE5 / Orsay).